Reading from the N-terminus, the 275-residue chain is Phosphonoacetaldehyde hydrolase (275 aa).

D15 (nucleophile) is an active-site residue. Residues D15 and A17 each contribute to the Mg(2+) site. K56 (schiff-base intermediate with substrate) is an active-site residue. D189 lines the Mg(2+) pocket.

Belongs to the HAD-like hydrolase superfamily. PhnX family. As to quaternary structure, homodimer. The cofactor is Mg(2+).

The enzyme catalyses phosphonoacetaldehyde + H2O = acetaldehyde + phosphate + H(+). Inhibited by phosphite, moderately inhibited by phosphonic acids, the corresponding aminophosphonic acids activate the enzyme. Its function is as follows. Involved in phosphonate degradation. The protein is Phosphonoacetaldehyde hydrolase of Pseudomonas aeruginosa (strain ATCC 15692 / DSM 22644 / CIP 104116 / JCM 14847 / LMG 12228 / 1C / PRS 101 / PAO1).